We begin with the raw amino-acid sequence, 445 residues long: Signal recognition particle 54 kDa protein (445 aa).

Residues 102 to 109 (GVQGSGKT), 184 to 188 (DTAGR), and 244 to 247 (TKMD) contribute to the GTP site.

It belongs to the GTP-binding SRP family. SRP54 subfamily. As to quaternary structure, part of the signal recognition particle protein translocation system, which is composed of SRP and FtsY. Archaeal SRP consists of a 7S RNA molecule of 300 nucleotides and two protein subunits: SRP54 and SRP19.

The protein resides in the cytoplasm. The enzyme catalyses GTP + H2O = GDP + phosphate + H(+). Involved in targeting and insertion of nascent membrane proteins into the cytoplasmic membrane. Binds to the hydrophobic signal sequence of the ribosome-nascent chain (RNC) as it emerges from the ribosomes. The SRP-RNC complex is then targeted to the cytoplasmic membrane where it interacts with the SRP receptor FtsY. This is Signal recognition particle 54 kDa protein from Sulfurisphaera tokodaii (strain DSM 16993 / JCM 10545 / NBRC 100140 / 7) (Sulfolobus tokodaii).